Here is a 546-residue protein sequence, read N- to C-terminus: Chaperonin GroEL 2 (546 aa).

ATP is bound by residues 29–32, 86–90, Gly418, 482–484, and Asp498; these read TLGP, DGTTT, and NAA.

The protein belongs to the chaperonin (HSP60) family. Forms a cylinder of 14 subunits composed of two heptameric rings stacked back-to-back. Interacts with the co-chaperonin GroES.

The protein resides in the cytoplasm. The enzyme catalyses ATP + H2O + a folded polypeptide = ADP + phosphate + an unfolded polypeptide.. Functionally, together with its co-chaperonin GroES, plays an essential role in assisting protein folding. The GroEL-GroES system forms a nano-cage that allows encapsulation of the non-native substrate proteins and provides a physical environment optimized to promote and accelerate protein folding. The sequence is that of Chaperonin GroEL 2 from Corynebacterium diphtheriae (strain ATCC 700971 / NCTC 13129 / Biotype gravis).